We begin with the raw amino-acid sequence, 150 residues long: Large ribosomal subunit protein bL9 (150 aa).

This sequence belongs to the bacterial ribosomal protein bL9 family.

Binds to the 23S rRNA. The sequence is that of Large ribosomal subunit protein bL9 from Erwinia tasmaniensis (strain DSM 17950 / CFBP 7177 / CIP 109463 / NCPPB 4357 / Et1/99).